Reading from the N-terminus, the 428-residue chain is MHSLQSFLFLLLLGYGVFAAPTSPQAQSQGRSFKVERIKRGNSIHGPTALRRAYRKFGIVPTTFGVDLSDFVPFNTTSISGTAANLVTDVQEPEQTGAVSAQSVQNDAAFVSPVTIGGQKIVMNFDTGSADFWVMNTELPASAQVGHTVFDPSKSSTFKKMEGATFEIKYGDSSFANGGVGTDTVDIGGATVTGQAIGIPTSVSNSFVEDTYSNGLVGLGFSSLNTVQPQQQKTFFDNIADSLDKPVMTAHLKSDGVGEYEFGIIDQTKYQGDMINVTVDSSGGFWQFQSAHYKVGDGPIQTIQNNAVAIADTGTSLMLLDDTVVNAYYAQVKGAQYASSAGGYIYPCNTELPNLAVAVGAKHLATVPGTFLDFAEVGINKTTGQTVCFGGIQSNQGTSMQILGDVFLKAFFVVFDLRGPSIGLASPK.

The signal sequence occupies residues 1 to 19 (MHSLQSFLFLLLLGYGVFA). Residues 20–90 (APTSPQAQSQ…GTAANLVTDV (71 aa)) constitute a propeptide, activation peptide. A Peptidase A1 domain is found at 110-425 (FVSPVTIGGQ…DLRGPSIGLA (316 aa)). Aspartate 126 is an active-site residue. A glycan (N-linked (GlcNAc...) asparagine) is linked at asparagine 276. Aspartate 312 is an active-site residue. Asparagine 380 carries an N-linked (GlcNAc...) asparagine glycan.

It belongs to the peptidase A1 family.

Its subcellular location is the secreted. This Aspergillus fumigatus (strain ATCC MYA-4609 / CBS 101355 / FGSC A1100 / Af293) (Neosartorya fumigata) protein is Putative aspergillopepsin A-like aspartic endopeptidase AFUA_2G15950.